We begin with the raw amino-acid sequence, 46 residues long: METSSLALQLAIIVLVVLLGLTGLGVYMAFGPAAKGLDDPWDEHDD.

The chain crosses the membrane as a helical span at residues 10–30; the sequence is LAIIVLVVLLGLTGLGVYMAF.

This sequence belongs to the PsbN family.

Its subcellular location is the cellular thylakoid membrane. May play a role in photosystem I and II biogenesis. The sequence is that of Protein PsbN from Prochlorococcus marinus (strain MIT 9211).